The following is a 291-amino-acid chain: Pyridoxal 5'-phosphate synthase subunit PdxS (291 aa).

Residue Asp-23 participates in D-ribose 5-phosphate binding. Catalysis depends on Lys-80, which acts as the Schiff-base intermediate with D-ribose 5-phosphate. Gly-152 serves as a coordination point for D-ribose 5-phosphate. Arg-164 contributes to the D-glyceraldehyde 3-phosphate binding site. D-ribose 5-phosphate-binding positions include Gly-213 and Gly-234–Ser-235.

Belongs to the PdxS/SNZ family. As to quaternary structure, in the presence of PdxT, forms a dodecamer of heterodimers.

The enzyme catalyses aldehydo-D-ribose 5-phosphate + D-glyceraldehyde 3-phosphate + L-glutamine = pyridoxal 5'-phosphate + L-glutamate + phosphate + 3 H2O + H(+). It functions in the pathway cofactor biosynthesis; pyridoxal 5'-phosphate biosynthesis. Its function is as follows. Catalyzes the formation of pyridoxal 5'-phosphate from ribose 5-phosphate (RBP), glyceraldehyde 3-phosphate (G3P) and ammonia. The ammonia is provided by the PdxT subunit. Can also use ribulose 5-phosphate and dihydroxyacetone phosphate as substrates, resulting from enzyme-catalyzed isomerization of RBP and G3P, respectively. This chain is Pyridoxal 5'-phosphate synthase subunit PdxS, found in Desulfitobacterium hafniense (strain DSM 10664 / DCB-2).